The sequence spans 459 residues: Acetyltransferase pigO (459 aa).

It belongs to the trichothecene O-acetyltransferase family.

It participates in secondary metabolite biosynthesis. Functionally, acetyltransferase; part of the gene cluster that mediates the biosynthesis of azaphilone pigments (MonAzPs), a complex mixture of compounds with a common azaphilone skeleton very widely used as food colorants. PigM and pigO are involved in the elimination of the omega-1 alcohol with pigM acting as an O-acetyltransferase that synthesizes the O-11 acetyl intermediate whereas pigO eliminates acetic acid to yield an intermediate with a C10(11) double bond. The first step of the pathway is performed by the nrPKS pigA that forms the hexaketide precursor from successive condensations of five malonyl-CoA units, with a simple acetyl-CoA starter unit. The role of esterase pigG is not clear, but it may play at most a supplementary role in the formation of the benzaldehyde produced by the pigA nrPKS. This very reactive benzaldehyde is intercepted by the pigC ketoreductase that to provide the first stable enzyme-free MonAzPs intermediate, 6-(4-hydroxy-2-oxopentyl)-3-methyl-2,4-dioxocyclohexane carbaldehyde, also known as M7PKS-1. The FAD-dependent monooxygenase pigN hydroxylates M7PKS-1 at C-4, which triggers the formation of the pyran ring. PigJ, pigK and pigD are involved in the acetylation of the pyran ring. PigJ and pigK form the two subunits of a dedicated fungal FAS that produces the side chain fatty acyl moiety of MonAzPs and pigD transfers the fatty acyl chain to the C-4 alcohol. PigM and pigO are involved in the elimination of the omega-1 alcohol. PigM acts as an O-acetyltransferase that synthesizes the putative O-11 acetyl intermediate whereas pigO eliminates acetic acid to yield an intermediate with a C10(11) double bond. The dehydration of the C-11 alcohol followed by the reduction of the C6(7) double bond by the NAD(P)H-dependent oxidoreductase pigE increases the electrophilicity of the C-5 ketone of the resulting acyl benzopyran. This in turn sets up the C-5 ketone for an intramolecular Knoevenagel aldol condensation with the C-20 enol of the side chain. This condensation affords the characteristic linear tricyclic carbon skeletons of the yellow pigments that serve as the common precursors for the classical yellow pigments monascin and ankaflavin, orange pigments rubopunctatin and monascorubrin, and red pigments ribropunctamine and monascorubramine. The FAD-dependent oxidoreductase pigF is especially invoved in the biosynthesis of orange and red pigments via desaturation of C6(7). The chain is Acetyltransferase pigO from Monascus ruber (Mold).